A 195-amino-acid polypeptide reads, in one-letter code: Nodulin-20a (195 aa).

The signal sequence occupies residues 1–17 (MRVVLITLFLFIGAAVA).

It belongs to the nodulin 20 family.

The protein localises to the symbiosome. The protein resides in the peribacteroid membrane. It is found in the peribacteroid space. In Glycine max (Soybean), this protein is Nodulin-20a (NOD20A).